Here is a 312-residue protein sequence, read N- to C-terminus: Acetyl-coenzyme A carboxylase carboxyl transferase subunit alpha (312 aa).

Positions 36–286 (RLDKEVKSIY…KEYFLDALRT (251 aa)) constitute a CoA carboxyltransferase C-terminal domain.

Belongs to the AccA family. Acetyl-CoA carboxylase is a heterohexamer composed of biotin carboxyl carrier protein (AccB), biotin carboxylase (AccC) and two subunits each of ACCase subunit alpha (AccA) and ACCase subunit beta (AccD).

The protein resides in the cytoplasm. The catalysed reaction is N(6)-carboxybiotinyl-L-lysyl-[protein] + acetyl-CoA = N(6)-biotinyl-L-lysyl-[protein] + malonyl-CoA. The protein operates within lipid metabolism; malonyl-CoA biosynthesis; malonyl-CoA from acetyl-CoA: step 1/1. Component of the acetyl coenzyme A carboxylase (ACC) complex. First, biotin carboxylase catalyzes the carboxylation of biotin on its carrier protein (BCCP) and then the CO(2) group is transferred by the carboxyltransferase to acetyl-CoA to form malonyl-CoA. The chain is Acetyl-coenzyme A carboxylase carboxyl transferase subunit alpha from Helicobacter pylori (strain J99 / ATCC 700824) (Campylobacter pylori J99).